A 97-amino-acid chain; its full sequence is Large ribosomal subunit protein uL30m (97 aa).

The protein belongs to the universal ribosomal protein uL30 family. As to quaternary structure, component of the mitochondrial large ribosomal subunit (mt-LSU). Mature yeast 74S mitochondrial ribosomes consist of a small (37S) and a large (54S) subunit. The 37S small subunit contains a 15S ribosomal RNA (15S mt-rRNA) and at least 32 different proteins. The 54S large subunit contains a 21S rRNA (21S mt-rRNA) and at least 45 different proteins.

It localises to the mitochondrion. In terms of biological role, component of the mitochondrial ribosome (mitoribosome), a dedicated translation machinery responsible for the synthesis of mitochondrial genome-encoded proteins, including at least some of the essential transmembrane subunits of the mitochondrial respiratory chain. The mitoribosomes are attached to the mitochondrial inner membrane and translation products are cotranslationally integrated into the membrane. This chain is Large ribosomal subunit protein uL30m (mrpl33), found in Schizosaccharomyces pombe (strain 972 / ATCC 24843) (Fission yeast).